The chain runs to 138 residues: Acidic phospholipase A2 BITP01A (138 aa).

A signal peptide spans 1 to 16 (MRTLWIMAVLLVGVEG). Cystine bridges form between C42–C131, C44–C60, C59–C111, C65–C138, C66–C104, C73–C97, and C91–C102. Ca(2+) is bound by residues Y43, G45, and G47. H63 is an active-site residue. D64 is a Ca(2+) binding site. D105 is an active-site residue.

Ca(2+) is required as a cofactor. In terms of tissue distribution, expressed by the venom gland.

It is found in the secreted. It carries out the reaction a 1,2-diacyl-sn-glycero-3-phosphocholine + H2O = a 1-acyl-sn-glycero-3-phosphocholine + a fatty acid + H(+). Its function is as follows. Snake venom phospholipase A2 (PLA2) that induces edema in mice, produces neuromuscular blockade in chick biventer cervicis, increases CK release and produces myonecrosis. PLA2 catalyzes the calcium-dependent hydrolysis of the 2-acyl groups in 3-sn-phosphoglycerides. This chain is Acidic phospholipase A2 BITP01A, found in Bothrops insularis (Golden lancehead).